A 116-amino-acid chain; its full sequence is Iron-sulfur cluster insertion protein ErpA (116 aa).

The iron-sulfur cluster site is built by Cys44, Cys108, and Cys110.

Belongs to the HesB/IscA family. As to quaternary structure, homodimer. Requires iron-sulfur cluster as cofactor.

Functionally, required for insertion of 4Fe-4S clusters for at least IspG. The chain is Iron-sulfur cluster insertion protein ErpA from Pseudomonas fluorescens (strain ATCC BAA-477 / NRRL B-23932 / Pf-5).